Here is a 622-residue protein sequence, read N- to C-terminus: Zinc finger protein ZIC 5 (622 aa).

4 disordered regions span residues 50-171, 190-223, 232-251, and 321-349; these read MHLH…KGHS, HGAP…SASG, GSAL…GHPL, and PGPH…HLPG. A compositionally biased stretch (pro residues) spans 126 to 151; it reads APPPPAPPLPPSQSSSPPPPPPPPPA. The segment covering 329-340 has biased composition (pro residues); that stretch reads APPPAPPPAPAP. A C2H2-type 1; degenerate zinc finger spans residues 422–444; that stretch reads EDCPREGKPFKAKYKLINHIRVH. C2H2-type zinc fingers lie at residues 450-474, 480-504, and 510-534; these read FPCP…KRTH, FKCE…SHVH, and YYCK…MKIH. Disordered stretches follow at residues 531 to 573 and 590 to 622; these read MKIH…STLS and APSH…RTIH. Phosphoserine is present on residues serine 537, serine 541, and serine 559. Polar residues predominate over residues 595–604; the sequence is HTPSSNGTTS.

The protein belongs to the GLI C2H2-type zinc-finger protein family.

It is found in the nucleus. Essential for neural crest development, converting cells from an epidermal fate to a neural crest cell fate. Binds to DNA. This Mus musculus (Mouse) protein is Zinc finger protein ZIC 5 (Zic5).